A 193-amino-acid chain; its full sequence is Cuticle protein 18.7 (193 aa).

Functionally, component of the cuticle of migratory locust which contains more than 100 different structural proteins. This is Cuticle protein 18.7 from Locusta migratoria (Migratory locust).